We begin with the raw amino-acid sequence, 69 residues long: Metallothionein-like protein CRS5 (69 aa).

This sequence belongs to the metallothionein superfamily. Type 13 family.

Its function is as follows. Critical role in copper (specific) homeostasis and detoxification. May protect by directly chelating and sequestering copper ions. The chain is Metallothionein-like protein CRS5 (CRS5) from Saccharomyces cerevisiae (strain RM11-1a) (Baker's yeast).